Reading from the N-terminus, the 215-residue chain is Adenylate kinase (215 aa).

14-19 (GVGKGT) contacts ATP. An NMP region spans residues 34 to 63 (STGDIFRSVMQEQGALSQTLAHYMNQGLYV). AMP-binding positions include threonine 35, arginine 40, 61 to 63 (LYV), 91 to 94 (GYPR), and glutamine 98. Residues 128–165 (NRLVCPSCGSVYNKQSKPPLKANQCDRCHATLQARNDD) are LID. Residue arginine 129 participates in ATP binding. Positions 132 and 135 each coordinate Zn(2+). Residue 138 to 139 (VY) participates in ATP binding. Residues cysteine 152 and cysteine 155 each coordinate Zn(2+). AMP is bound by residues arginine 162 and arginine 173. Glutamine 211 is an ATP binding site.

The protein belongs to the adenylate kinase family. In terms of assembly, monomer.

Its subcellular location is the cytoplasm. It catalyses the reaction AMP + ATP = 2 ADP. It participates in purine metabolism; AMP biosynthesis via salvage pathway; AMP from ADP: step 1/1. Its function is as follows. Catalyzes the reversible transfer of the terminal phosphate group between ATP and AMP. Plays an important role in cellular energy homeostasis and in adenine nucleotide metabolism. In Mycoplasma pneumoniae (strain ATCC 29342 / M129 / Subtype 1) (Mycoplasmoides pneumoniae), this protein is Adenylate kinase.